A 158-amino-acid chain; its full sequence is Transcription elongation factor GreA (158 aa).

The protein belongs to the GreA/GreB family.

Its function is as follows. Necessary for efficient RNA polymerase transcription elongation past template-encoded arresting sites. The arresting sites in DNA have the property of trapping a certain fraction of elongating RNA polymerases that pass through, resulting in locked ternary complexes. Cleavage of the nascent transcript by cleavage factors such as GreA or GreB allows the resumption of elongation from the new 3'terminus. GreA releases sequences of 2 to 3 nucleotides. In Psychrobacter arcticus (strain DSM 17307 / VKM B-2377 / 273-4), this protein is Transcription elongation factor GreA.